Reading from the N-terminus, the 661-residue chain is Acetyl-coenzyme A synthetase (661 aa).

Residues 199–202 (RGGK) and T317 contribute to the CoA site. ATP-binding positions include 393 to 395 (GEP), 417 to 422 (DTFWQT), D508, and R523. A CoA-binding site is contributed by S531. Position 534 (R534) interacts with ATP. CoA is bound at residue R596.

Belongs to the ATP-dependent AMP-binding enzyme family.

The enzyme catalyses acetate + ATP + CoA = acetyl-CoA + AMP + diphosphate. The protein is Acetyl-coenzyme A synthetase (ACS-1) of Coprinopsis cinerea (Inky cap fungus).